The chain runs to 485 residues: Bifunctional protein GlmU (485 aa).

Residues 1–241 (MSASDFSSAV…ARELAGVNDR (241 aa)) form a pyrophosphorylase region. UDP-N-acetyl-alpha-D-glucosamine-binding positions include 13-16 (LAAG), lysine 27, glutamine 84, and 89-90 (GT). Aspartate 114 contributes to the Mg(2+) binding site. 4 residues coordinate UDP-N-acetyl-alpha-D-glucosamine: glycine 151, glutamate 166, asparagine 181, and asparagine 239. A Mg(2+)-binding site is contributed by asparagine 239. Residues 242-262 (VQLAEAGAELNRRTVIAAMRG) are linker. Residues 263 to 485 (GATIVDPATT…AAQNVHNQEG (223 aa)) are N-acetyltransferase. UDP-N-acetyl-alpha-D-glucosamine-binding residues include arginine 344 and lysine 362. The active-site Proton acceptor is the histidine 374. Positions 377 and 388 each coordinate UDP-N-acetyl-alpha-D-glucosamine. Acetyl-CoA-binding positions include alanine 391, 397–398 (NY), serine 416, and alanine 434. Positions 465–485 (RPGTAAAQAAEAAQNVHNQEG) are disordered. The segment covering 469 to 478 (AAAQAAEAAQ) has biased composition (low complexity).

It in the N-terminal section; belongs to the N-acetylglucosamine-1-phosphate uridyltransferase family. This sequence in the C-terminal section; belongs to the transferase hexapeptide repeat family. In terms of assembly, homotrimer. Requires Mg(2+) as cofactor.

The protein resides in the cytoplasm. The enzyme catalyses alpha-D-glucosamine 1-phosphate + acetyl-CoA = N-acetyl-alpha-D-glucosamine 1-phosphate + CoA + H(+). It catalyses the reaction N-acetyl-alpha-D-glucosamine 1-phosphate + UTP + H(+) = UDP-N-acetyl-alpha-D-glucosamine + diphosphate. The protein operates within nucleotide-sugar biosynthesis; UDP-N-acetyl-alpha-D-glucosamine biosynthesis; N-acetyl-alpha-D-glucosamine 1-phosphate from alpha-D-glucosamine 6-phosphate (route II): step 2/2. It functions in the pathway nucleotide-sugar biosynthesis; UDP-N-acetyl-alpha-D-glucosamine biosynthesis; UDP-N-acetyl-alpha-D-glucosamine from N-acetyl-alpha-D-glucosamine 1-phosphate: step 1/1. It participates in bacterial outer membrane biogenesis; LPS lipid A biosynthesis. In terms of biological role, catalyzes the last two sequential reactions in the de novo biosynthetic pathway for UDP-N-acetylglucosamine (UDP-GlcNAc). The C-terminal domain catalyzes the transfer of acetyl group from acetyl coenzyme A to glucosamine-1-phosphate (GlcN-1-P) to produce N-acetylglucosamine-1-phosphate (GlcNAc-1-P), which is converted into UDP-GlcNAc by the transfer of uridine 5-monophosphate (from uridine 5-triphosphate), a reaction catalyzed by the N-terminal domain. The polypeptide is Bifunctional protein GlmU (Corynebacterium glutamicum (strain R)).